The sequence spans 798 residues: Cold shock domain-containing protein E1 (798 aa).

The region spanning 26–87 (ETGVIEKLLT…RTGKPIAIKL (62 aa)) is the CSD 1 domain. Lys81 bears the N6-acetyllysine mark. Residue Lys91 forms a Glycyl lysine isopeptide (Lys-Gly) (interchain with G-Cter in SUMO2) linkage. At Ser123 the chain carries Phosphoserine. A CSD 2; truncated domain is found at 136 to 179 (VFYLTYTSEDVEGNVQLETGDKINFVIDNNKHTGAVSARNIMLL). A CSD 3 domain is found at 186-245 (CQGVVCAMKEAFGFIERGDVVKEIFFHYSEFKGDLETLQPGDDVEFTIKDRNGKEVATDV). Residue Ser276 is modified to Phosphoserine. The 41-residue stretch at 297-337 (LPFGDKDTKSKVTLLEGDHVRFNISTDRRDKLERATNIEVL) folds into the CSD 4; truncated domain. 2 CSD domains span residues 349 to 410 (EMGV…AIRI) and 447 to 507 (NKGK…ATCV). Ser514 is modified (phosphoserine). Positions 519–579 (LLGYVATLKD…KGNKVSAEKV (61 aa)) constitute a CSD 7 domain. A Phosphoserine modification is found at Ser584. 2 CSD domains span residues 610 to 670 (PTQI…AYNI) and 674 to 735 (RRAT…ACNV). Residues 748-789 (PRPDRLVNRLKNITLDDASAPRLMVLRQPRGPDNSMGFGAER) form the SUZ-C domain. Residue Thr761 is modified to Phosphothreonine.

This sequence belongs to the UNR family. As to quaternary structure, component of a multi subunit autoregulatory ribonucleoprotein complex (ARC), at least composed of IGF2BP1, PABPC1 and CSDE1. Interacts with STRAP. Part of a complex associated with the FOS mCRD domain and consisting of PABPC1, PAIP1, HNRPD and SYNCRIP. The interaction with PABPC1 is direct and RNA-independent. Interacts with EIF4ENIF1/4E-T.

It localises to the cytoplasm. It is found in the stress granule. The protein resides in the P-body. Functionally, RNA-binding protein involved in translationally coupled mRNA turnover. Implicated with other RNA-binding proteins in the cytoplasmic deadenylation/translational and decay interplay of the FOS mRNA mediated by the major coding-region determinant of instability (mCRD) domain. Required for efficient formation of stress granules. The protein is Cold shock domain-containing protein E1 of Mus musculus (Mouse).